A 194-amino-acid polypeptide reads, in one-letter code: Pyridoxine/pyridoxamine 5'-phosphate oxidase (194 aa).

FMN-binding positions include 42 to 47 (RVVLLK), 57 to 58 (FT), arginine 63, lysine 64, and glutamine 86. Substrate is bound at residue lysine 47. Tyrosine 104, arginine 108, and serine 112 together coordinate substrate. FMN-binding positions include 121-122 (QS) and tryptophan 166. Residue 172–174 (RIH) participates in substrate binding. Arginine 176 contributes to the FMN binding site.

The protein belongs to the pyridoxamine 5'-phosphate oxidase family. Homodimer. FMN serves as cofactor.

It carries out the reaction pyridoxamine 5'-phosphate + O2 + H2O = pyridoxal 5'-phosphate + H2O2 + NH4(+). The catalysed reaction is pyridoxine 5'-phosphate + O2 = pyridoxal 5'-phosphate + H2O2. Its pathway is cofactor metabolism; pyridoxal 5'-phosphate salvage; pyridoxal 5'-phosphate from pyridoxamine 5'-phosphate: step 1/1. It participates in cofactor metabolism; pyridoxal 5'-phosphate salvage; pyridoxal 5'-phosphate from pyridoxine 5'-phosphate: step 1/1. Its function is as follows. Catalyzes the oxidation of either pyridoxine 5'-phosphate (PNP) or pyridoxamine 5'-phosphate (PMP) into pyridoxal 5'-phosphate (PLP). The protein is Pyridoxine/pyridoxamine 5'-phosphate oxidase of Ehrlichia ruminantium (strain Welgevonden).